We begin with the raw amino-acid sequence, 348 residues long: Methylthioribose-1-phosphate isomerase (348 aa).

Residues Arg51–Ala53, Arg94, and Gln199 each bind substrate. Asp240 serves as the catalytic Proton donor. Substrate is bound at residue Asn250–Lys251.

The protein belongs to the eIF-2B alpha/beta/delta subunits family. MtnA subfamily.

It carries out the reaction 5-(methylsulfanyl)-alpha-D-ribose 1-phosphate = 5-(methylsulfanyl)-D-ribulose 1-phosphate. It participates in amino-acid biosynthesis; L-methionine biosynthesis via salvage pathway; L-methionine from S-methyl-5-thio-alpha-D-ribose 1-phosphate: step 1/6. Catalyzes the interconversion of methylthioribose-1-phosphate (MTR-1-P) into methylthioribulose-1-phosphate (MTRu-1-P). The polypeptide is Methylthioribose-1-phosphate isomerase (Nitrosococcus oceani (strain ATCC 19707 / BCRC 17464 / JCM 30415 / NCIMB 11848 / C-107)).